The sequence spans 405 residues: L-rhamnonate dehydratase (405 aa).

2 residues coordinate substrate: His33 and Arg59. Asp226, Glu252, and Glu280 together coordinate Mg(2+). Catalysis depends on His329, which acts as the Proton acceptor. Glu349 provides a ligand contact to substrate.

Belongs to the mandelate racemase/muconate lactonizing enzyme family. RhamD subfamily. As to quaternary structure, homooctamer; tetramer of dimers. Mg(2+) is required as a cofactor.

It carries out the reaction L-rhamnonate = 2-dehydro-3-deoxy-L-rhamnonate + H2O. Functionally, catalyzes the dehydration of L-rhamnonate to 2-keto-3-deoxy-L-rhamnonate (KDR). The polypeptide is L-rhamnonate dehydratase (Escherichia coli O127:H6 (strain E2348/69 / EPEC)).